The following is a 488-amino-acid chain: UDP-N-acetylmuramate--L-alanine ligase (488 aa).

ATP is bound at residue 127–133 (GTHGKTT).

This sequence belongs to the MurCDEF family.

It localises to the cytoplasm. The catalysed reaction is UDP-N-acetyl-alpha-D-muramate + L-alanine + ATP = UDP-N-acetyl-alpha-D-muramoyl-L-alanine + ADP + phosphate + H(+). Its pathway is cell wall biogenesis; peptidoglycan biosynthesis. Cell wall formation. The protein is UDP-N-acetylmuramate--L-alanine ligase of Shewanella sp. (strain MR-4).